The sequence spans 231 residues: ATP-dependent dethiobiotin synthetase BioD 2 (231 aa).

Residue 13–18 participates in ATP binding; the sequence is SVGKTV. Position 17 (threonine 17) interacts with Mg(2+). Lysine 38 is a catalytic residue. Residues aspartate 55, 112-115, 172-173, 201-203, and glutamine 208 contribute to the ATP site; these read EGTG, NR, and PYL. The Mg(2+) site is built by aspartate 55 and glutamate 112.

It belongs to the dethiobiotin synthetase family. In terms of assembly, homodimer. The cofactor is Mg(2+).

The protein resides in the cytoplasm. The enzyme catalyses (7R,8S)-7,8-diammoniononanoate + CO2 + ATP = (4R,5S)-dethiobiotin + ADP + phosphate + 3 H(+). It functions in the pathway cofactor biosynthesis; biotin biosynthesis; biotin from 7,8-diaminononanoate: step 1/2. Its function is as follows. Catalyzes a mechanistically unusual reaction, the ATP-dependent insertion of CO2 between the N7 and N8 nitrogen atoms of 7,8-diaminopelargonic acid (DAPA, also called 7,8-diammoniononanoate) to form a ureido ring. This Salmonella typhimurium (strain LT2 / SGSC1412 / ATCC 700720) protein is ATP-dependent dethiobiotin synthetase BioD 2.